Reading from the N-terminus, the 440-residue chain is Chromosome partition protein MukF (440 aa).

The segment at 208–236 (LSETSGTLRELQDTLEAAGDKLQANLLRI) is leucine-zipper.

The protein belongs to the MukF family. In terms of assembly, interacts, and probably forms a ternary complex, with MukE and MukB via its C-terminal region. The complex formation is stimulated by calcium or magnesium. It is required for an interaction between MukE and MukB.

Its subcellular location is the cytoplasm. It is found in the nucleoid. Functionally, involved in chromosome condensation, segregation and cell cycle progression. May participate in facilitating chromosome segregation by condensation DNA from both sides of a centrally located replisome during cell division. Not required for mini-F plasmid partitioning. Probably acts via its interaction with MukB and MukE. Overexpression results in anucleate cells. It has a calcium binding activity. In Photorhabdus laumondii subsp. laumondii (strain DSM 15139 / CIP 105565 / TT01) (Photorhabdus luminescens subsp. laumondii), this protein is Chromosome partition protein MukF.